The chain runs to 193 residues: Acyl carrier protein phosphodiesterase (193 aa).

Belongs to the AcpH family.

It carries out the reaction holo-[ACP] + H2O = apo-[ACP] + (R)-4'-phosphopantetheine + H(+). In terms of biological role, converts holo-ACP to apo-ACP by hydrolytic cleavage of the phosphopantetheine prosthetic group from ACP. The sequence is that of Acyl carrier protein phosphodiesterase from Escherichia coli O127:H6 (strain E2348/69 / EPEC).